A 154-amino-acid chain; its full sequence is 3-hydroxyacyl-[acyl-carrier-protein] dehydratase FabZ (154 aa).

His-55 is an active-site residue.

It belongs to the thioester dehydratase family. FabZ subfamily.

It is found in the cytoplasm. The catalysed reaction is a (3R)-hydroxyacyl-[ACP] = a (2E)-enoyl-[ACP] + H2O. Its function is as follows. Involved in unsaturated fatty acids biosynthesis. Catalyzes the dehydration of short chain beta-hydroxyacyl-ACPs and long chain saturated and unsaturated beta-hydroxyacyl-ACPs. This Nitratidesulfovibrio vulgaris (strain DSM 19637 / Miyazaki F) (Desulfovibrio vulgaris) protein is 3-hydroxyacyl-[acyl-carrier-protein] dehydratase FabZ.